A 494-amino-acid polypeptide reads, in one-letter code: Glycerol kinase (494 aa).

Residue threonine 13 coordinates ADP. ATP contacts are provided by threonine 13, threonine 14, and serine 15. Threonine 13 contacts sn-glycerol 3-phosphate. Position 17 (arginine 17) interacts with ADP. Sn-glycerol 3-phosphate-binding residues include arginine 83, glutamate 84, tyrosine 135, and aspartate 244. Glycerol-binding residues include arginine 83, glutamate 84, tyrosine 135, aspartate 244, and glutamine 245. Residues threonine 266 and glycine 309 each coordinate ADP. ATP contacts are provided by threonine 266, glycine 309, glutamine 313, and glycine 410. ADP contacts are provided by glycine 410 and asparagine 414.

It belongs to the FGGY kinase family.

The catalysed reaction is glycerol + ATP = sn-glycerol 3-phosphate + ADP + H(+). Its pathway is polyol metabolism; glycerol degradation via glycerol kinase pathway; sn-glycerol 3-phosphate from glycerol: step 1/1. Its activity is regulated as follows. Inhibited by fructose 1,6-bisphosphate (FBP). In terms of biological role, key enzyme in the regulation of glycerol uptake and metabolism. Catalyzes the phosphorylation of glycerol to yield sn-glycerol 3-phosphate. This chain is Glycerol kinase, found in Shewanella baltica (strain OS223).